Here is a 396-residue protein sequence, read N- to C-terminus: Ribosomal RNA large subunit methyltransferase I (396 aa).

Positions 2 to 79 (AIRIKLKPGR…REEEIDREFF (78 aa)) constitute a PUA domain.

It belongs to the methyltransferase superfamily. RlmI family.

The protein localises to the cytoplasm. It carries out the reaction cytidine(1962) in 23S rRNA + S-adenosyl-L-methionine = 5-methylcytidine(1962) in 23S rRNA + S-adenosyl-L-homocysteine + H(+). Functionally, specifically methylates the cytosine at position 1962 (m5C1962) of 23S rRNA. This chain is Ribosomal RNA large subunit methyltransferase I, found in Shewanella baltica (strain OS155 / ATCC BAA-1091).